We begin with the raw amino-acid sequence, 285 residues long: Avenin-like b2 (285 aa).

The signal sequence occupies residues 1–18 (MKVFILALLALTATTAIA).

This sequence belongs to the prolamin family. Contains disulfide bonds.

Seed storage protein. Might be integrated via inter-chain disulfide bonds within the glutenin polymer. In Triticum aestivum (Wheat), this protein is Avenin-like b2.